Consider the following 432-residue polypeptide: UDP-N-acetylglucosamine 1-carboxyvinyltransferase (432 aa).

Lys22–Asn23 contacts phosphoenolpyruvate. Position 96 (Arg96) interacts with UDP-N-acetyl-alpha-D-glucosamine. The active-site Proton donor is the Cys120. At Cys120 the chain carries 2-(S-cysteinyl)pyruvic acid O-phosphothioketal. UDP-N-acetyl-alpha-D-glucosamine-binding positions include Arg125–Leu129, Asp310, and Ile332.

Belongs to the EPSP synthase family. MurA subfamily.

The protein resides in the cytoplasm. The catalysed reaction is phosphoenolpyruvate + UDP-N-acetyl-alpha-D-glucosamine = UDP-N-acetyl-3-O-(1-carboxyvinyl)-alpha-D-glucosamine + phosphate. Its pathway is cell wall biogenesis; peptidoglycan biosynthesis. Its function is as follows. Cell wall formation. Adds enolpyruvyl to UDP-N-acetylglucosamine. This chain is UDP-N-acetylglucosamine 1-carboxyvinyltransferase, found in Caulobacter sp. (strain K31).